Here is a 2185-residue protein sequence, read N- to C-terminus: Genome polyprotein (2185 aa).

Residue Gly2 is the site of N-myristoyl glycine; by host attachment. The Cytoplasmic portion of the chain corresponds to 2 to 1495; that stretch reads GAQVSTQKTG…HVNRAFICLQ (1494 aa). Residues 566–582 are amphipathic alpha-helix; that stretch reads FFQGPPGEVVERAIARV. Residues His872 and Asp890 each act as for protease 2A activity in the active site. Zn(2+)-binding residues include Cys907 and Cys909. The active-site For protease 2A activity is the Cys961. Positions 967 and 969 each coordinate Zn(2+). Residues 1101-1173 form a membrane-binding region; the sequence is NSGWLKKFTE…EQSAPSQSDQ (73 aa). Residues 1101 to 1239 form an oligomerization region; sequence NSGWLKKFTE…SPGAGKSVAT (139 aa). The segment at 1122 to 1126 is RNA-binding; it reads AIKIQ. An SF3 helicase domain is found at 1205 to 1361; that stretch reads EKKMSNYIQF…SMYSQNGKIN (157 aa). Zn(2+) is bound by residues Cys1369, Cys1381, and Cys1386. A C4-type; degenerate zinc finger spans residues 1369–1386; it reads CDEECCPVNFKKCCPLVC. Positions 1413–1420 are RNA-binding; that stretch reads EYNHRHSV. Positions 1424-1429 are oligomerization; that stretch reads LEALFQ. The stretch at 1496–1511 is an intramembrane region; that stretch reads ALTTFVSVAGIIYIIY. The Cytoplasmic portion of the chain corresponds to 1512–2185; sequence KLFAGFQGAY…TLRRKWLDSF (674 aa). O-(5'-phospho-RNA)-tyrosine is present on Tyr1521. In terms of domain architecture, Peptidase C3 spans 1541–1719; it reads GPAFEFAVAM…FSAALLRHYF (179 aa). Residues His1580, Glu1611, and Cys1687 each act as for protease 3C activity in the active site. A RdRp catalytic domain is found at 1950–2066; that stretch reads GHLIAFDYSG…SYPWPIDASL (117 aa). 2 residues coordinate Mg(2+): Asp1956 and Asp2052.

Belongs to the picornaviruses polyprotein family. As to quaternary structure, interacts with capsid protein VP1 and capsid protein VP3 to form heterotrimeric protomers. In terms of assembly, interacts with capsid protein VP0, and capsid protein VP3 to form heterotrimeric protomers. Five protomers subsequently associate to form pentamers which serve as building blocks for the capsid. Interacts with capsid protein VP2, capsid protein VP3 and capsid protein VP4 following cleavage of capsid protein VP0. Interacts with capsid protein VP1 and capsid protein VP3 in the mature capsid. As to quaternary structure, interacts with capsid protein VP0 and capsid protein VP1 to form heterotrimeric protomers. Five protomers subsequently associate to form pentamers which serve as building blocks for the capsid. Interacts with capsid protein VP4 in the mature capsid. Interacts with protein 2C; this interaction may be important for virion morphogenesis. In terms of assembly, interacts with capsid protein VP1 and capsid protein VP3. Homodimer. As to quaternary structure, homohexamer; forms a hexameric ring structure with 6-fold symmetry characteristic of AAA+ ATPases. Interacts (via N-terminus) with host RTN3 (via reticulon domain); this interaction is important for viral replication. Interacts with capsid protein VP3; this interaction may be important for virion morphogenesis. In terms of assembly, interacts with protein 3CD. Homodimer. Interacts with host GBF1. Interacts (via GOLD domain) with host ACBD3 (via GOLD domain); this interaction allows the formation of a viral protein 3A/ACBD3 heterotetramer with a 2:2 stoichiometry, which will stimulate the recruitment of host PI4KB in order to synthesize PI4P at the viral RNA replication sites. As to quaternary structure, interacts with RNA-directed RNA polymerase. In terms of assembly, interacts with protein 3AB and with RNA-directed RNA polymerase. Interacts with Viral protein genome-linked and with protein 3CD. The cofactor is Mg(2+). In terms of processing, specific enzymatic cleavages in vivo by the viral proteases yield processing intermediates and the mature proteins. Myristoylation is required for the formation of pentamers during virus assembly. Further assembly of 12 pentamers and a molecule of genomic RNA generates the provirion. Post-translationally, during virion maturation, immature virions are rendered infectious following cleavage of VP0 into VP4 and VP2. This maturation seems to be an autocatalytic event triggered by the presence of RNA in the capsid and it is followed by a conformational change infectious virion. In terms of processing, myristoylation is required during RNA encapsidation and formation of the mature virus particle. VPg is uridylylated by the polymerase into VPg-pUpU. This acts as a nucleotide-peptide primer for the genomic RNA replication.

The protein resides in the virion. The protein localises to the host cytoplasm. It localises to the host cytoplasmic vesicle membrane. Its subcellular location is the host nucleus. It carries out the reaction a ribonucleoside 5'-triphosphate + H2O = a ribonucleoside 5'-diphosphate + phosphate + H(+). It catalyses the reaction Selective cleavage of Tyr-|-Gly bond in the picornavirus polyprotein.. The catalysed reaction is RNA(n) + a ribonucleoside 5'-triphosphate = RNA(n+1) + diphosphate. The enzyme catalyses Selective cleavage of Gln-|-Gly bond in the poliovirus polyprotein. In other picornavirus reactions Glu may be substituted for Gln, and Ser or Thr for Gly.. With respect to regulation, replication or transcription is subject to high level of random mutations by the nucleotide analog ribavirin. Functionally, forms an icosahedral capsid of pseudo T=3 symmetry with capsid proteins VP2 and VP3. The capsid is 300 Angstroms in diameter, composed of 60 copies of each capsid protein and enclosing the viral positive strand RNA genome. Capsid protein VP1 mainly forms the vertices of the capsid. Capsid protein VP1 interacts with host cell receptor to provide virion attachment to target host cells. This attachment induces virion internalization. Tyrosine kinases are probably involved in the entry process. After binding to its receptor, the capsid undergoes conformational changes. Capsid protein VP1 N-terminus (that contains an amphipathic alpha-helix) and capsid protein VP4 are externalized. Together, they shape a pore in the host membrane through which viral genome is translocated to host cell cytoplasm. Forms an icosahedral capsid of pseudo T=3 symmetry with capsid proteins VP2 and VP3. The capsid is 300 Angstroms in diameter, composed of 60 copies of each capsid protein and enclosing the viral positive strand RNA genome. Its function is as follows. Lies on the inner surface of the capsid shell. After binding to the host receptor, the capsid undergoes conformational changes. Capsid protein VP4 is released, Capsid protein VP1 N-terminus is externalized, and together, they shape a pore in the host membrane through which the viral genome is translocated into the host cell cytoplasm. In terms of biological role, component of immature procapsids, which is cleaved into capsid proteins VP4 and VP2 after maturation. Allows the capsid to remain inactive before the maturation step. Functionally, cysteine protease that cleaves viral polyprotein and specific host proteins. It is responsible for the autocatalytic cleavage between the P1 and P2 regions, which is the first cleavage occurring in the polyprotein. Also cleaves the host translation initiation factor EIF4G1, in order to shut down the capped cellular mRNA translation. Inhibits the host nucleus-cytoplasm protein and RNA trafficking by cleaving host members of the nuclear pores. Counteracts stress granule formation probably by antagonizing its assembly or promoting its dissassembly. Plays an essential role in the virus replication cycle by acting as a viroporin. Creates a pore in the host endoplasmic reticulum and as a consequence releases Ca2+ in the cytoplasm of infected cell. In turn, high levels of cytoplasmic calcium may trigger membrane trafficking and transport of viral ER-associated proteins to viroplasms, sites of viral genome replication. Its function is as follows. Induces and associates with structural rearrangements of intracellular membranes. Displays RNA-binding, nucleotide binding and NTPase activities. May play a role in virion morphogenesis and viral RNA encapsidation by interacting with the capsid protein VP3. In terms of biological role, localizes the viral replication complex to the surface of membranous vesicles. Together with protein 3CD binds the Cis-Active RNA Element (CRE) which is involved in RNA synthesis initiation. Acts as a cofactor to stimulate the activity of 3D polymerase, maybe through a nucleid acid chaperone activity. Functionally, localizes the viral replication complex to the surface of membranous vesicles. It inhibits host cell endoplasmic reticulum-to-Golgi apparatus transport and causes the disassembly of the Golgi complex, possibly through GBF1 interaction. This would result in depletion of MHC, trail receptors and IFN receptors at the host cell surface. Plays an essential role in viral RNA replication by recruiting ACBD3 and PI4KB at the viral replication sites, thereby allowing the formation of the rearranged membranous structures where viral replication takes place. Acts as a primer for viral RNA replication and remains covalently bound to viral genomic RNA. VPg is uridylylated prior to priming replication into VPg-pUpU. The oriI viral genomic sequence may act as a template for this. The VPg-pUpU is then used as primer on the genomic RNA poly(A) by the RNA-dependent RNA polymerase to replicate the viral genome. During genome replication, the VPg-RNA linkage is removed by the host TDP2, thereby accelerating replication. During the late stage of the replication cycle, host TDP2 is excluded from sites of viral RNA synthesis and encapsidation, allowing for the generation of progeny virions. Its function is as follows. Involved in the viral replication complex and viral polypeptide maturation. It exhibits protease activity with a specificity and catalytic efficiency that is different from protease 3C. Protein 3CD lacks polymerase activity. Protein 3CD binds to the 5'UTR of the viral genome. In terms of biological role, major viral protease that mediates proteolytic processing of the polyprotein. Cleaves host EIF5B, contributing to host translation shutoff. Also cleaves host PABPC1, contributing to host translation shutoff. Cleaves host NLRP1, triggers host N-glycine-mediated degradation of the autoinhibitory NLRP1 N-terminal fragment. Functionally, replicates the viral genomic RNA on the surface of intracellular membranes. May form linear arrays of subunits that propagate along a strong head-to-tail interaction called interface-I. Covalently attaches UMP to a tyrosine of VPg, which is used to prime RNA synthesis. The positive stranded RNA genome is first replicated at virus induced membranous vesicles, creating a dsRNA genomic replication form. This dsRNA is then used as template to synthesize positive stranded RNA genomes. ss(+)RNA genomes are either translated, replicated or encapsidated. In Swine vesicular disease virus (strain H/3 '76) (SVDV), this protein is Genome polyprotein.